The following is a 359-amino-acid chain: Heat-inducible transcription repressor HrcA (359 aa).

Belongs to the HrcA family.

Negative regulator of class I heat shock genes (grpE-dnaK-dnaJ and groELS operons). Prevents heat-shock induction of these operons. This Rhizobium meliloti (strain 1021) (Ensifer meliloti) protein is Heat-inducible transcription repressor HrcA.